We begin with the raw amino-acid sequence, 206 residues long: Probable glutathione S-transferase 6 (206 aa).

The GST N-terminal domain maps to 2–79; it reads VHYKLVYFPL…YLAREFGIAG (78 aa). Residues Tyr-8, Trp-39, Lys-43, 49–51, and 63–64 contribute to the glutathione site; these read GQL and QS. Positions 81–206 constitute a GST C-terminal domain; the sequence is NDTEAAEVDA…YIANRPDYPF (126 aa).

The protein belongs to the GST superfamily. Sigma family.

It carries out the reaction RX + glutathione = an S-substituted glutathione + a halide anion + H(+). Conjugation of reduced glutathione to a wide number of exogenous and endogenous hydrophobic electrophiles. The sequence is that of Probable glutathione S-transferase 6 (gst-6) from Caenorhabditis elegans.